A 1691-amino-acid polypeptide reads, in one-letter code: Protein TIC 214 (1691 aa).

6 helical membrane passes run 19-39, 60-80, 84-104, 123-143, 158-178, and 200-220; these read MLLGFYYGLLTTLPVGPSQIL, VLAQLITASSIYCSPIYLLLL, LLTIVAIPYTLLFCLVIKDFP, LFLISFFFQILNPIMLPNSVL, TVFMVSTFMGWLTGQAAFNFF, and FIYATFSIVSISYAVAYLGRA. The tract at residues 819–839 is disordered; the sequence is EKQHTLQRKHKEIGSKSRELK.

The protein belongs to the TIC214 family. In terms of assembly, part of the Tic complex.

It is found in the plastid. The protein resides in the chloroplast inner membrane. Its function is as follows. Involved in protein precursor import into chloroplasts. May be part of an intermediate translocation complex acting as a protein-conducting channel at the inner envelope. The chain is Protein TIC 214 from Adiantum capillus-veneris (Maidenhair fern).